Consider the following 1098-residue polypeptide: MVRAQETVYDLITKCSVRRVPPKQFVNFYNEFFNERYDSVLENGNPAGESRPTAPVYEEVAQDLVRILNDSRVNLVADYVLEIVLINLNVDLLRLFLPKLHHVRNVMLLVHLFSRATAFISGLDNKLLAEQISDTVYTDVTPAVLSFNMQAIDDQLVIVLAKFLHAVLRLPEGQQKMGSVPTKQKAATLLQRLSTIDRLLYKRFIADLDGKLRLSGAPADMSFPLPPSNMPSPSVTSPKYETSSVGVMKRSTSMSNEAKYQDIKLARYYKNLWLNNKIHYCTVSDPLFLEKYDSILELATGGGLSADRPVKAKIADLVETAFTCFAQFVSNKLYHQSNSNFSLLERKWTVFVTKQLPLIIKSSIPDKTDIVLRTLENIDDKVIKAIKSYNTEKEEVKNRTEDLFDDYPVNSLDIRHEFLKNLIMMGLQPPTVLNEYLREDQMVDLKSLVTSEHLIIDNSQGVRETILNVRNFITKSIESLEFENLFDDGNQLLVTNDHGIIQIAHNLETISPTKQLEIANILYDLLSAAIESLDHKTISKVLTILTLNVGHLLTNIFCLTGYEKFARAVIRFIDVIWESNKSKSNDMVSDDSEFENINSAMAYTLSLCFIIHVVDIYGVNVEALVENPSKSTVLRFLSKLGEIPEVFVAPEGDLESSKTLLQQWLRELFVKNLISDNLMKSADVKVMGFMIPFIFKQTLLNVEYGIISDISSFVNGFEYFLQPFLSVGLINIVFWLEKYLLALKTTESFPKINGALFDILGAIIAPKSIGSDAKAIHSVVLKLKCVGLLKELKSFQVPSESNYGIYSSQTRQDPRLEALISKLELIAQSSALYDVDPRIISAVNNNYSQKHISYNKVVLTSDIPINKIMTNQINSFWNLHSSTYYNFDYLLELIDLVTPFKFVQDVFQTLKYKVTAYGVPGSATKPSSAALDQVLGYVFYFMVLRDIKCPEEKSLLLEYLDSGRFPSSISATVLTSDPTTISGMPPVSMPYDVKSEQDAMEGVDEDFDMLFGESFSGLPDDVQKSADMKPDTGIKEDDSEKSSYVSAARLTESFGVIFSKMKKDKLEAYQAGQISEERYQCFMGLYDKYVQTLRHSVI.

Residues 1019–1041 (PDDVQKSADMKPDTGIKEDDSEK) form a disordered region. The segment covering 1021-1041 (DVQKSADMKPDTGIKEDDSEK) has biased composition (basic and acidic residues).

Belongs to the Mediator complex subunit 5 family. Component of the Mediator complex.

Its subcellular location is the nucleus. In terms of biological role, component of the Mediator complex, a coactivator involved in the regulated transcription of nearly all RNA polymerase II-dependent genes. Mediator functions as a bridge to convey information from gene-specific regulatory proteins to the basal RNA polymerase II transcription machinery. Mediator is recruited to promoters by direct interactions with regulatory proteins and serves as a scaffold for the assembly of a functional preinitiation complex with RNA polymerase II and the general transcription factors. The polypeptide is Mediator of RNA polymerase II transcription subunit 5 (NUT1) (Eremothecium gossypii (strain ATCC 10895 / CBS 109.51 / FGSC 9923 / NRRL Y-1056) (Yeast)).